A 283-amino-acid polypeptide reads, in one-letter code: Pantothenate synthetase (283 aa).

30 to 37 (MGNLHAGH) contacts ATP. The active-site Proton donor is the H37. Q61 is a (R)-pantoate binding site. Q61 provides a ligand contact to beta-alanine. Residue 149–152 (GQKD) coordinates ATP. Q155 provides a ligand contact to (R)-pantoate. ATP-binding positions include V178 and 186 to 189 (LSSR).

The protein belongs to the pantothenate synthetase family. In terms of assembly, homodimer.

The protein resides in the cytoplasm. The enzyme catalyses (R)-pantoate + beta-alanine + ATP = (R)-pantothenate + AMP + diphosphate + H(+). Its pathway is cofactor biosynthesis; (R)-pantothenate biosynthesis; (R)-pantothenate from (R)-pantoate and beta-alanine: step 1/1. Its function is as follows. Catalyzes the condensation of pantoate with beta-alanine in an ATP-dependent reaction via a pantoyl-adenylate intermediate. The polypeptide is Pantothenate synthetase (Hydrogenovibrio crunogenus (strain DSM 25203 / XCL-2) (Thiomicrospira crunogena)).